The chain runs to 775 residues: Glutamine--tRNA ligase (775 aa).

Alanine 2 carries the post-translational modification N-acetylalanine. Serine 70 carries the phosphoserine modification. ATP contacts are provided by residues glutamate 271–asparagine 273 and histidine 277–alanine 283. Aspartate 303 provides a ligand contact to L-glutamine. Lysine 309 is subject to N6-acetyllysine. Tyrosine 438 contacts L-glutamine. ATP-binding positions include threonine 457, arginine 486–leucine 487, and valine 494–lysine 496. Position 495 is a phosphoserine (serine 495).

This sequence belongs to the class-I aminoacyl-tRNA synthetase family. Monomer. Part of a multisubunit complex that groups tRNA ligases for Arg (RARS1), Asp (DARS1), Gln (QARS1), Ile (IARS1), Leu (LARS1), Lys (KARS1), Met (MARS1) the bifunctional ligase for Glu and Pro (EPRS1) and the auxiliary subunits AIMP1/p43, AIMP2/p38 and EEF1E1/p18. Interacts with RARS1. Part of a complex composed of RARS1, QARS1 and AIMP1.

It is found in the cytoplasm. The protein localises to the cytosol. The catalysed reaction is tRNA(Gln) + L-glutamine + ATP = L-glutaminyl-tRNA(Gln) + AMP + diphosphate. In terms of biological role, glutamine--tRNA ligase. Plays a critical role in brain development. The sequence is that of Glutamine--tRNA ligase (Qars1) from Mus musculus (Mouse).